Reading from the N-terminus, the 2422-residue chain is Interferon-induced very large GTPase 1 (2422 aa).

A disordered region spans residues 945-965 (ENFFEDSDSPTKSSSTEPSPH). Positions 954 to 963 (PTKSSSTEPS) are enriched in low complexity. The VLIG-type G domain maps to 1479 to 1720 (DKRLFVLSIL…KISDVKSRVQ (242 aa)). Residues 1489-1496 (GLQSSGKS), 1542-1545 (DTEG), and 1619-1622 (TATD) each bind GTP.

It belongs to the TRAFAC class dynamin-like GTPase superfamily. Very large inducible GTPase (VLIG) family.

It is found in the cytoplasm. Its subcellular location is the cytosol. It localises to the nucleus. This is Interferon-induced very large GTPase 1 (GVINP1) from Homo sapiens (Human).